Consider the following 978-residue polypeptide: Macrophage colony-stimulating factor 1 receptor (978 aa).

Positions 1-19 are cleaved as a signal peptide; the sequence is MELGPPLVLLLATVWHGQG. Topologically, residues 20–515 are extracellular; the sequence is APVIEPSGPE…QLPDESLFTP (496 aa). Ig-like C2-type domains follow at residues 24–104, 107–197, 204–298, 299–397, and 398–503; these read EPSG…VKDP, SWNL…KVNR, QIKL…VVES, AYLN…LTLR, and YPPE…SLGQ. 3 disulfides stabilise this stretch: C42–C84, C127–C177, and C224–C278. Residues N45 and N73 are each glycosylated (N-linked (GlcNAc...) asparagine). N302, N335, N389, N410, N449, N478, and N491 each carry an N-linked (GlcNAc...) asparagine glycan. The cysteines at positions 417 and 483 are disulfide-linked. Residues 516–536 traverse the membrane as a helical segment; that stretch reads VVVACMSVMSLLVLLLLLLLY. At 537-978 the chain is on the cytoplasmic side; sequence KYKQKPKYQV…LQPNNYQFAC (442 aa). Positions 540–572 are regulatory juxtamembrane domain; that stretch reads QKPKYQVRWKIIERYEGNSYTFIDPTQLPYNEK. Phosphotyrosine; by autocatalysis occurs at positions 544 and 559. The region spanning 580–914 is the Protein kinase domain; sequence LQFGKTLGAG…CFLLQEQARL (335 aa). ATP-binding positions include 586–594 and K614; that span reads LGAGAFGKV. Phosphotyrosine; by autocatalysis occurs at positions 697 and 706. S711 carries the post-translational modification Phosphoserine. Y721 is modified (phosphotyrosine; by autocatalysis). Residue D776 is the Proton acceptor of the active site. The interval 794 to 816 is activation loop; it reads DFGLARDIMNDSNYVVKGNARLP. Y807 and Y921 each carry phosphotyrosine; by autocatalysis. A disordered region spans residues 921-957; the sequence is YANLPSSGGSSGSDSGGGSSGGSSSEPEEESSSEHLA. Positions 929–941 are enriched in gly residues; the sequence is GSSGSDSGGGSSG. Y974 is modified (phosphotyrosine; by autocatalysis).

The protein belongs to the protein kinase superfamily. Tyr protein kinase family. CSF-1/PDGF receptor subfamily. In terms of assembly, monomer. Homodimer. Interacts with CSF1 and IL34. Interaction with dimeric CSF1 or IL34 leads to receptor homodimerization. Interacts with INPPL1/SHIP2 and THOC5. Interacts (tyrosine phosphorylated) with PLCG2 (via SH2 domain). Interacts (tyrosine phosphorylated) with PIK3R1 (via SH2 domain). Interacts (tyrosine phosphorylated) with FYN, YES1 and SRC (via SH2 domain). Interacts (tyrosine phosphorylated) with CBL, GRB2 and SLA2. Autophosphorylated in response to CSF1 or IL34 binding. Phosphorylation at Tyr-559 is important for normal down-regulation of signaling by ubiquitination, internalization and degradation. Phosphorylation at Tyr-559 and Tyr-807 is important for interaction with SRC family members, including FYN, YES1 and SRC, and for subsequent activation of these protein kinases. Phosphorylation at Tyr-697 and Tyr-921 is important for interaction with GRB2. Phosphorylation at Tyr-721 is important for interaction with PIK3R1. Phosphorylation at Tyr-721 and Tyr-807 is important for interaction with PLCG2. Phosphorylation at Tyr-974 is important for interaction with CBL. Dephosphorylation by PTPN2 negatively regulates downstream signaling and macrophage differentiation. In terms of processing, ubiquitinated. Becomes rapidly polyubiquitinated after autophosphorylation, leading to its degradation.

The protein localises to the cell membrane. The catalysed reaction is L-tyrosyl-[protein] + ATP = O-phospho-L-tyrosyl-[protein] + ADP + H(+). With respect to regulation, present in an inactive conformation in the absence of bound ligand. CSF1 or IL34 binding leads to dimerization and activation by autophosphorylation on tyrosine residues. Tyrosine-protein kinase that acts as a cell-surface receptor for CSF1 and IL34 and plays an essential role in the regulation of survival, proliferation and differentiation of hematopoietic precursor cells, especially mononuclear phagocytes, such as macrophages and monocytes. Promotes the release of pro-inflammatory chemokines in response to IL34 and CSF1, and thereby plays an important role in innate immunity and in inflammatory processes. Plays an important role in the regulation of osteoclast proliferation and differentiation, the regulation of bone resorption, and is required for normal bone and tooth development. Required for normal male and female fertility, and for normal development of milk ducts and acinar structures in the mammary gland during pregnancy. Promotes reorganization of the actin cytoskeleton, regulates formation of membrane ruffles, cell adhesion and cell migration, and promotes cancer cell invasion. Activates several signaling pathways in response to ligand binding, including the ERK1/2 and the JNK pathway. Phosphorylates PIK3R1, PLCG2, GRB2, SLA2 and CBL. Activation of PLCG2 leads to the production of the cellular signaling molecules diacylglycerol and inositol 1,4,5-trisphosphate, that then lead to the activation of protein kinase C family members, especially PRKCD. Phosphorylation of PIK3R1, the regulatory subunit of phosphatidylinositol 3-kinase, leads to activation of the AKT1 signaling pathway. Activated CSF1R also mediates activation of the MAP kinases MAPK1/ERK2 and/or MAPK3/ERK1, and of the SRC family kinases SRC, FYN and YES1. Activated CSF1R transmits signals both via proteins that directly interact with phosphorylated tyrosine residues in its intracellular domain, or via adapter proteins, such as GRB2. Promotes activation of STAT family members STAT3, STAT5A and/or STAT5B. Promotes tyrosine phosphorylation of SHC1 and INPP5D/SHIP-1. Receptor signaling is down-regulated by protein phosphatases, such as INPP5D/SHIP-1, that dephosphorylate the receptor and its downstream effectors, and by rapid internalization of the activated receptor. In the central nervous system, may play a role in the development of microglia macrophages. This chain is Macrophage colony-stimulating factor 1 receptor (Csf1r), found in Rattus norvegicus (Rat).